Reading from the N-terminus, the 50-residue chain is Light-harvesting protein B-880 alpha chain (50 aa).

Over 1–12 (MYKLWLLFDPRR) the chain is Cytoplasmic. The helical transmembrane segment at 13–33 (ALVALSAFLFVLALIIHFIAL) threads the bilayer. Residue H29 participates in a bacteriochlorophyll binding. The Periplasmic segment spans residues 34–50 (STDRFNWLEGKPAVKAA).

It belongs to the antenna complex alpha subunit family. In terms of assembly, the core complex is formed by different alpha and beta chains, binding bacteriochlorophyll molecules, and arranged most probably in tetrameric structures disposed around the reaction center. The non-pigmented gamma chains may constitute additional components.

It is found in the cell inner membrane. Functionally, antenna complexes are light-harvesting systems, which transfer the excitation energy to the reaction centers. The chain is Light-harvesting protein B-880 alpha chain from Rhodoblastus acidophilus (Rhodopseudomonas acidophila).